The primary structure comprises 836 residues: Spliceosome associated factor 3, U4/U6 recycling protein (836 aa).

HAT repeat units lie at residues 127–163 (EDFK…YEMS), 296–329 (KLPQ…FERD), 331–367 (RPNE…LLRR), 418–451 (KNMD…LERQ), and 453–486 (GDKE…FERE). The segment at 507–585 (RAIRPQKKVS…APGSFAVQKA (79 aa)) is disordered. Positions 540 to 550 (IVKKVKGDDGG) are enriched in basic and acidic residues. Low complexity predominate over residues 558–579 (SNAKSSSAVSSSNASSTPAPGS). 2 RRM domains span residues 593–668 (RTIF…ANDP) and 683–760 (SKVF…LSNP). Disordered stretches follow at residues 757-786 (LSNP…PRKG) and 811-830 (AMDV…DQFR). The span at 816–827 (EGTSTSQPLSND) shows a compositional bias: polar residues.

Forms a complex composed of sart-3, terminal uridylyltransferase usip-1 and U6 snRNA; complex formation is mediated by usip-1 and sart-3 binding to U6 snRNA. Associates with U4 and U6 snRNP complexes, probably by interacting with U4 and U6 snRNAs. In terms of tissue distribution, ubiquitously expressed.

Its subcellular location is the nucleus. The protein localises to the nucleoplasm. U6 snRNP-binding protein that functions as a recycling factor of the splicing machinery. Promotes the initial reassembly of U4 and U6 snRNPs following their ejection from the spliceosome during its maturation. The polypeptide is Spliceosome associated factor 3, U4/U6 recycling protein (Caenorhabditis elegans).